We begin with the raw amino-acid sequence, 380 residues long: Glutamate 5-kinase (380 aa).

Lys20 is a binding site for ATP. Substrate contacts are provided by Ser59, Asp146, and Asn158. 220-226 (TGGMYSK) is an ATP binding site. The PUA domain occupies 285–363 (SGTVTVDEGA…HEVAAILGDA (79 aa)).

Belongs to the glutamate 5-kinase family.

It is found in the cytoplasm. The catalysed reaction is L-glutamate + ATP = L-glutamyl 5-phosphate + ADP. Its pathway is amino-acid biosynthesis; L-proline biosynthesis; L-glutamate 5-semialdehyde from L-glutamate: step 1/2. Its function is as follows. Catalyzes the transfer of a phosphate group to glutamate to form L-glutamate 5-phosphate. In Nitratidesulfovibrio vulgaris (strain ATCC 29579 / DSM 644 / CCUG 34227 / NCIMB 8303 / VKM B-1760 / Hildenborough) (Desulfovibrio vulgaris), this protein is Glutamate 5-kinase.